Consider the following 603-residue polypeptide: NADH-ubiquinone oxidoreductase chain 5 (603 aa).

Transmembrane regions (helical) follow at residues 4-24 (YTSI…ATLV), 36-56 (VKTT…LYIF), 87-107 (MMFI…SLWY), 122-142 (LIFL…QLFI), 171-191 (AVLY…WFLL), 211-233 (LPLM…HPWL), 241-261 (TPVS…FLLI), 272-292 (LTQN…AMCA), 301-320 (IVAF…IGIN), 325-347 (AFLH…GSII), 370-390 (STSL…TGFY), 406-422 (AWAL…TSAY), 488-508 (LLAL…TLMT), and 583-603 (MIKL…LLMV).

Belongs to the complex I subunit 5 family. In terms of assembly, core subunit of respiratory chain NADH dehydrogenase (Complex I) which is composed of 45 different subunits.

It is found in the mitochondrion inner membrane. The enzyme catalyses a ubiquinone + NADH + 5 H(+)(in) = a ubiquinol + NAD(+) + 4 H(+)(out). Its function is as follows. Core subunit of the mitochondrial membrane respiratory chain NADH dehydrogenase (Complex I) which catalyzes electron transfer from NADH through the respiratory chain, using ubiquinone as an electron acceptor. Essential for the catalytic activity and assembly of complex I. The sequence is that of NADH-ubiquinone oxidoreductase chain 5 (MT-ND5) from Papio hamadryas (Hamadryas baboon).